We begin with the raw amino-acid sequence, 2294 residues long: Protein Ycf2 (2294 aa).

Residue 1635–1642 (GSIGTGRS) coordinates ATP.

The protein belongs to the Ycf2 family.

It is found in the plastid. Its subcellular location is the chloroplast stroma. Its function is as follows. Probable ATPase of unknown function. Its presence in a non-photosynthetic plant (Epifagus virginiana) and experiments in tobacco indicate that it has an essential function which is probably not related to photosynthesis. The sequence is that of Protein Ycf2 from Ranunculus macranthus (Large buttercup).